The sequence spans 287 residues: CBK1 kinase activator protein MOB2 (287 aa).

A disordered region spans residues 1–89 (MSFFNFKAFG…QQQEASERSE (89 aa)). At Tyr33 the chain carries Phosphotyrosine. Low complexity predominate over residues 34–44 (SSPHSSNSRLS). Residues 45–56 (LRNKHHSPKRHS) are compositionally biased toward basic residues. A Phosphoserine modification is found at Ser59. Residues 63-83 (QKSTPQSQQLTSTTPQSQQQE) show a composition bias toward low complexity. At Thr76 the chain carries Phosphothreonine.

This sequence belongs to the MOB1/phocein family. As to quaternary structure, interacts with protein kinase CBK1 to form the RAM CBK1-MOB2 kinase complex.

The protein localises to the nucleus. The protein resides in the cytoplasm. Functionally, functions as an activator subunit for the CBK1 protein kinase. Part of the regulation of ACE2 activity and cellular morphogenesis (RAM) signaling network. Required for coordinating polarized cell growth during interphase with the onset of mitosis. Required for mother/daughter cell separation after cytokinesis. Also has a role in the prevention of nuclear export of ACE2 from the daughter cell nucleus after mitotic exit. It coordinates ACE2-dependent transcription with mitotic exit network activation. This Saccharomyces cerevisiae (strain ATCC 204508 / S288c) (Baker's yeast) protein is CBK1 kinase activator protein MOB2 (MOB2).